The sequence spans 265 residues: Mlc titration factor A (265 aa).

Zn(2+) contacts are provided by His111, His148, His152, and Glu211.

The protein belongs to the MtfA family. Interacts with Mlc. Zn(2+) is required as a cofactor.

The protein localises to the cytoplasm. Functionally, involved in the modulation of the activity of the glucose-phosphotransferase system (glucose-PTS). Interacts with the transcriptional repressor Mlc, preventing its interaction with DNA and leading to the modulation of expression of genes regulated by Mlc, including ptsG, which encodes the PTS system glucose-specific EIICB component. In terms of biological role, shows zinc-dependent metallopeptidase activity. The polypeptide is Mlc titration factor A (Shigella dysenteriae serotype 1 (strain Sd197)).